Consider the following 2873-residue polypeptide: Fibrillin-1 (2873 aa).

Positions 1 to 24 (MRRGGLLEVALAFALLLESYTSHG) are cleaved as a signal peptide. A propeptide spanning residues 25 to 44 (ADANLEAGSLKETRANRAKR) is cleaved from the precursor. The segment at 45–81 (RGGGGHDALKGPNVCGSRYNAYCCPGWKTLPGGNQCI) is fibrillin unique N-terminal (FUN) domain. Positions 45–452 (RGGGGHDALK…PPRVLPFNVT (408 aa)) are N-terminal domain. 11 cysteine pairs are disulfide-bonded: Cys-59/Cys-68, Cys-67/Cys-80, Cys-85/Cys-94, Cys-89/Cys-100, Cys-102/Cys-111, Cys-119/Cys-129, Cys-123/Cys-134, Cys-136/Cys-145, Cys-150/Cys-160, Cys-154/Cys-166, and Cys-168/Cys-177. 3 consecutive EGF-like domains span residues 81-112 (IVPICRHSCGDGFCSRPNMCTCPSGQISPSCG), 115-146 (SIQHCSIRCMNGGSCSDDHCLCQKGYIGTHCG), and 147-178 (QPVCESGCLNGGRCVAPNRCACTYGFTGPQCE). Residues 119 to 329 (CSIRCMNGGS…YTSPDGTRCV (211 aa)) are interaction with MFAP4. Residues 184–236 (GPCFTVVSNQMCQGQLSGIVCTKTLCCATVGRAWGHPCEMCPAQPHPCRRGFI) form the TB 1 domain. The hybrid domain 1 stretch occupies residues 195–221 (CQGQLSGIVCTKTLCCATVGRAWGHPC). The EGF-like 4; calcium-binding domain maps to 246–287 (DVDECQAIPGMCQGGNCINTVGSFECKCPAGHKFNEVSQKCE). 6 disulfides stabilise this stretch: Cys-250–Cys-262, Cys-257–Cys-271, Cys-273–Cys-286, Cys-292–Cys-304, Cys-299–Cys-313, and Cys-315–Cys-328. O-linked (Glc) serine glycosylation is present at Ser-268. The 42-residue stretch at 288–329 (DIDECSTIPGVCDGGECTNTVSSYFCKCPPGFYTSPDGTRCV) folds into the EGF-like 5; calcium-binding domain. The TB 2 domain occupies 334 to 389 (GYCYTALANGRCSNQLPQSITKMQCCCDLGRCWSPGVTVAPEMCPIRSTEDFNKLC). Asn-450 carries an N-linked (GlcNAc...) asparagine glycan. Residues 451 to 491 (VTDYCQLVRYLCQNGRCIPTPGSYRCECNKGFQLDIRGECI) form the EGF-like 6 domain. 15 disulfides stabilise this stretch: Cys-455-Cys-467, Cys-462-Cys-476, Cys-478-Cys-490, Cys-496-Cys-506, Cys-501-Cys-515, Cys-517-Cys-530, Cys-536-Cys-548, Cys-543-Cys-557, Cys-559-Cys-572, Cys-578-Cys-589, Cys-584-Cys-598, Cys-600-Cys-613, Cys-619-Cys-630, Cys-625-Cys-639, and Cys-641-Cys-654. Ser-473 is a glycosylation site (O-linked (Glc) serine). The region spanning 492 to 531 (DVDECEKNPCTGGECINNQGSYTCHCRAGYQSTLTRTECR) is the EGF-like 7; calcium-binding domain. O-linked (Glc) serine glycosylation occurs at Ser-512. Positions 532-573 (DIDECLQNGRICNNGRCINTDGSFHCVCNAGFHVTRDGKNCE) constitute an EGF-like 8; calcium-binding domain. One can recognise an EGF-like 9; calcium-binding domain in the interval 574–614 (DMDECSIRNMCLNGMCINEDGSFKCICKPGFQLASDGRYCK). The EGF-like 10; calcium-binding domain maps to 615 to 655 (DINECETPGICMNGRCVNTDGSYRCECFPGLAVGLDGRVCV). Residues 661–713 (STCYGGYRRGQCVKPLFGAVTKSECCCASTEYAFGEPCQPCPAQNSAEYQALC) form the TB 3 domain. In terms of domain architecture, EGF-like 11; calcium-binding spans 725–766 (DINECALDPDICPNGICENLRGTYKCICNSGYEVDITGKNCV). Intrachain disulfides connect Cys-729/Cys-741, Cys-736/Cys-750, Cys-752/Cys-765, Cys-771/Cys-783, Cys-778/Cys-792, Cys-794/Cys-807, Cys-813/Cys-823, Cys-818/Cys-832, Cys-834/Cys-847, Cys-855/Cys-877, Cys-864/Cys-889, Cys-878/Cys-892, Cys-898/Cys-910, Cys-916/Cys-928, Cys-923/Cys-937, and Cys-939/Cys-952. The EGF-like 12; calcium-binding domain occupies 767–808 (DINECVLNSLLCDNGQCRNTPGSFVCTCPKGFVYKPDLKTCE). The 40-residue stretch at 809-848 (DIDECESSPCINGVCKNSPGSFICECSPESTLDPTKTICI) folds into the EGF-like 13; calcium-binding domain. Residues 853–904 (GTCWQTVIDGRCEININGATLKSECCSSLGAAWGSPCTICQLDPICGKGFSR) form the TB 4 domain. The tract at residues 862-887 (GRCEININGATLKSECCSSLGAAWGS) is hybrid domain 2. An EGF-like 14; calcium-binding domain is found at 912–953 (DINECEVFPGVCKNGLCVNSRGSFKCECPNGMTLDATGRICL). The region spanning 958-1010 (ETCFLKYDDEECTLPIAGRHRMDACCCSVGAAWGTEECEECPLRNSREYEELC) is the TB 5 domain. Residues 1030-1071 (DINECKMIPSLCTHGKCRNTIGSFKCRCDSGFALDSEERNCT) enclose the EGF-like 15; calcium-binding domain. Disulfide bonds link Cys-1034/Cys-1046, Cys-1041/Cys-1055, Cys-1057/Cys-1070, Cys-1076/Cys-1088, Cys-1083/Cys-1097, Cys-1099/Cys-1113, Cys-1119/Cys-1131, Cys-1126/Cys-1140, Cys-1142/Cys-1155, Cys-1161/Cys-1173, Cys-1168/Cys-1182, Cys-1184/Cys-1197, Cys-1203/Cys-1214, Cys-1210/Cys-1223, Cys-1225/Cys-1238, Cys-1244/Cys-1256, Cys-1251/Cys-1265, Cys-1267/Cys-1280, Cys-1286/Cys-1298, Cys-1293/Cys-1307, Cys-1309/Cys-1322, Cys-1328/Cys-1341, Cys-1335/Cys-1350, Cys-1352/Cys-1363, Cys-1369/Cys-1382, Cys-1376/Cys-1391, Cys-1393/Cys-1404, Cys-1410/Cys-1422, Cys-1417/Cys-1431, Cys-1433/Cys-1446, Cys-1452/Cys-1463, Cys-1458/Cys-1472, Cys-1474/Cys-1487, Cys-1493/Cys-1504, Cys-1499/Cys-1513, Cys-1515/Cys-1528, Cys-1536/Cys-1564, Cys-1551/Cys-1576, Cys-1565/Cys-1579, Cys-1566/Cys-1591, Cys-1612/Cys-1624, Cys-1619/Cys-1633, Cys-1635/Cys-1648, Cys-1654/Cys-1665, Cys-1660/Cys-1674, and Cys-1676/Cys-1689. Asn-1069 carries an N-linked (GlcNAc...) asparagine glycan. The region spanning 1072 to 1114 (DIDECRISPDLCGRGQCVNTPGDFECKCDEGYESGFMMMKNCM) is the EGF-like 16; calcium-binding domain. An EGF-like 17; calcium-binding domain is found at 1115-1156 (DIDECQRDPLLCRGGICHNTEGSYRCECPPGHQLSPNISACI). Ser-1137 carries O-linked (Glc) serine glycosylation. Asn-1151 carries N-linked (GlcNAc...) asparagine glycosylation. The 42-residue stretch at 1157–1198 (DINECELSANLCPHGRCVNLIGKYQCACNPGYHPTHDRLFCV) folds into the EGF-like 18; calcium-binding domain. Residues 1199–1239 (DIDECSIMNGGCETFCTNSDGSYECSCQPGFALMPDQRSCT) enclose the EGF-like 19; calcium-binding domain. An O-linked (Glc) serine glycan is attached at Ser-1220. Residues 1240–1281 (DIDECEDNPNICDGGQCTNIPGEYRCLCYDGFMASEDMKTCV) form the EGF-like 20; calcium-binding domain. The EGF-like 21; calcium-binding domain occupies 1282–1323 (DVNECDLNPNICLSGTCENTKGSFICHCDMGYSGKKGKTGCT). Ser-1304 carries O-linked (Glc) serine glycosylation. Residues 1324-1364 (DINECEIGAHNCGRHAVCTNTAGSFKCSCSPGWIGDGIKCT) enclose the EGF-like 22; calcium-binding domain. O-linked (Glc) serine glycosylation occurs at Ser-1347. In terms of domain architecture, EGF-like 23; calcium-binding spans 1365–1405 (DLDECSNGTHMCSQHADCKNTMGSYRCLCKDGYTGDGFTCT). Asn-1371 is a glycosylation site (N-linked (GlcNAc...) asparagine). Residue Ser-1388 is glycosylated (O-linked (Glc) serine). The region spanning 1406–1447 (DLDECSENLNLCGNGQCLNAPGGYRCECDMGFVPSADGKACE) is the EGF-like 24; calcium-binding domain. One can recognise an EGF-like 25; calcium-binding domain in the interval 1448–1488 (DIDECSLPNICVFGTCHNLPGLFRCECEIGYELDRSGGNCT). N-linked (GlcNAc...) asparagine glycosylation occurs at Asn-1486. The EGF-like 26; calcium-binding domain occupies 1489–1529 (DVNECLDPTTCISGNCVNTPGSYTCDCPPDFELNPTRVGCV). An O-linked (Glc) serine glycan is attached at Ser-1510. The C-terminal domain stretch occupies residues 1530–2733 (DTRSGNCYLD…GYPKRGRKRR (1204 aa)). Residues 1534–1591 (GNCYLDIRPRGDNGDTACSNEIGVGVSKASCCCSLGKAWGTPCELCPSVNTSEYKILC) enclose the TB 6 domain. Residues 1543-1545 (RGD) carry the Cell attachment site motif. An N-linked (GlcNAc...) asparagine glycan is attached at Asn-1583. Residues 1608–1649 (DIDECQELPGLCQGGKCINTFGSFQCRCPTGYYLNEDTRVCD) enclose the EGF-like 27; calcium-binding domain. Residue Ser-1630 is glycosylated (O-linked (Glc) serine). The EGF-like 28; calcium-binding domain maps to 1650 to 1690 (DVNECETPGICGPGTCYNTVGNYTCICPPDYMQVNGGNNCM). Residue Asn-1671 is glycosylated (N-linked (GlcNAc...) asparagine). Residues 1695–1750 (SLCYRNYYADNQTCDGELLFNMTKKMCCCSYNIGRAWNKPCEQCPIPSTDEFATLC) enclose the TB 7 domain. Residues Asn-1705 and Asn-1715 are each glycosylated (N-linked (GlcNAc...) asparagine). An EGF-like 29; calcium-binding domain is found at 1768-1809 (DIDECREIPGVCENGVCINMVGSFRCECPVGFFYNDKLLVCE). Cystine bridges form between Cys-1772/Cys-1784, Cys-1779/Cys-1793, Cys-1795/Cys-1808, Cys-1814/Cys-1826, Cys-1820/Cys-1835, Cys-1837/Cys-1849, Cys-1855/Cys-1867, Cys-1862/Cys-1876, Cys-1878/Cys-1891, Cys-1897/Cys-1907, Cys-1902/Cys-1916, Cys-1918/Cys-1930, Cys-1936/Cys-1949, Cys-1944/Cys-1958, Cys-1960/Cys-1973, Cys-1979/Cys-1991, Cys-1986/Cys-2000, Cys-2002/Cys-2013, Cys-2019/Cys-2031, Cys-2026/Cys-2040, Cys-2042/Cys-2055, Cys-2063/Cys-2085, Cys-2072/Cys-2098, Cys-2086/Cys-2101, Cys-2087/Cys-2113, Cys-2133/Cys-2144, Cys-2139/Cys-2153, Cys-2155/Cys-2166, Cys-2172/Cys-2183, Cys-2178/Cys-2192, Cys-2194/Cys-2206, Cys-2212/Cys-2223, Cys-2219/Cys-2232, Cys-2234/Cys-2247, Cys-2253/Cys-2267, Cys-2260/Cys-2276, Cys-2278/Cys-2291, Cys-2297/Cys-2309, Cys-2304/Cys-2318, and Cys-2320/Cys-2333. Residues 1810–1850 (DIDECQNGPVCQRNAECINTAGSYRCDCKPGYRLTSTGQCN) enclose the EGF-like 30; calcium-binding domain. Ser-1832 carries an O-linked (Glc) serine glycan. The region spanning 1851-1892 (DRNECQEIPNICSHGQCIDTVGSFYCLCHTGFKTNVDQTMCL) is the EGF-like 31; calcium-binding domain. Ser-1873 is a glycosylation site (O-linked (Glc) serine). Positions 1893-1931 (DINECERDACGNGTCRNTIGSFNCRCNHGFILSHNNDCI) constitute an EGF-like 32; calcium-binding domain. Asn-1904 carries N-linked (GlcNAc...) asparagine glycosylation. An O-linked (Glc) serine glycan is attached at Ser-1913. The EGF-like 33; calcium-binding domain occupies 1932 to 1974 (DVDECATGNGNLCRNGQCVNTVGSFQCRCNEGYEVAPDGRTCV). A glycan (O-linked (Glc) serine) is linked at Ser-1955. Residues 1975–2014 (DINECVLDPGKCAPGTCQNLDGSYRCICPPGYSLQNDKCE) enclose the EGF-like 34; calcium-binding domain. The region spanning 2015–2056 (DIDECVEEPEICALGTCSNTEGSFKCLCPEGFSLSSTGRRCQ) is the EGF-like 35; calcium-binding domain. Ser-2037 is a glycosylation site (O-linked (Glc) serine). Residues 2061-2113 (SYCYAKFEGGKCSSPKSRNHSKQECCCALKGEGWGDPCELCPTEPDEAFRQIC) enclose the TB 8 domain. The N-linked (GlcNAc...) asparagine glycan is linked to Asn-2079. One can recognise an EGF-like 36; calcium-binding domain in the interval 2129–2167 (DMDECKEPDVCRHGQCINTDGSYRCECPFGYILEGNECV). An O-linked (Glc) serine glycan is attached at Ser-2150. Residues 2168–2207 (DTDECSVGNPCGNGTCKNVIGGFECTCEEGFEPGPMMTCE) enclose the EGF-like 37; calcium-binding domain. N-linked (GlcNAc...) asparagine glycosylation is present at Asn-2180. Residues 2208–2248 (DINECAQNPLLCAFRCVNTYGSYECKCPVGYVLREDRRMCK) enclose the EGF-like 38; calcium-binding domain. A glycan (O-linked (Glc) serine) is linked at Ser-2229. One can recognise an EGF-like 39; calcium-binding domain in the interval 2249–2292 (DEDECAEGKHDCTEKQMECKNLIGTYMCICGPGYQRRPDGEGCI). The EGF-like 40; calcium-binding domain occupies 2293–2334 (DENECQTKPGICENGRCLNTLGSYTCECNDGFTASPTQDECL). Residue Ser-2315 is glycosylated (O-linked (Glc) serine). One can recognise a TB 9 domain in the interval 2339 to 2392 (GYCFSEVLQNMCQIGSSNRNPVTKSECCCDGGRGWGPHCEICPFEGTVAYKKLC). The EGF-like 41; calcium-binding domain occupies 2404–2445 (DIDECKVIHDVCRNGECVNDRGSYHCICKTGYTPDITGTACV). Cystine bridges form between Cys-2408/Cys-2420, Cys-2415/Cys-2429, Cys-2431/Cys-2444, Cys-2450/Cys-2461, Cys-2457/Cys-2470, Cys-2472/Cys-2485, Cys-2491/Cys-2502, Cys-2498/Cys-2511, Cys-2513/Cys-2524, Cys-2530/Cys-2543, Cys-2537/Cys-2552, Cys-2554/Cys-2567, Cys-2573/Cys-2583, Cys-2579/Cys-2592, Cys-2594/Cys-2607, Cys-2613/Cys-2624, Cys-2619/Cys-2633, Cys-2635/Cys-2648, Cys-2654/Cys-2665, Cys-2661/Cys-2674, and Cys-2676/Cys-2688. Residues 2446–2486 (DLNECNQAPKPCNFICKNTEGSYQCSCPKGYILQEDGRSCK) form the EGF-like 42; calcium-binding domain. Ser-2467 is a glycosylation site (O-linked (Glc) serine). Residues 2487–2525 (DLDECATKQHNCQFLCVNTIGGFTCKCPPGFTQHHTACI) enclose the EGF-like 43; calcium-binding domain. One can recognise an EGF-like 44; calcium-binding domain in the interval 2526–2568 (DNNECTSDINLCGSKGVCQNTPGSFTCECQRGFSLDQSGASCE). O-linked (Glc) serine glycosylation occurs at Ser-2549. Positions 2569-2608 (DVDECEGNHRCQHGCQNIIGGYRCSCPQGYLQHYQWNQCV) constitute an EGF-like 45; calcium-binding domain. The EGF-like 46; calcium-binding domain occupies 2609-2649 (DENECLSAHVCGGASCHNTLGSYKCMCPTGFQYEQFSGGCQ). An O-linked (Glc) serine glycan is attached at Ser-2630. The EGF-like 47; calcium-binding domain maps to 2650–2689 (DINECGSSQAPCSYGCSNTEGGYLCGCPPGYFRIGQGHCV). A phosphoserine mark is found at Ser-2704, Ser-2705, and Ser-2711. Residues 2728-2747 (RGRKRRSTNETDASDIQDGS) form a disordered region. Asn-2736, Asn-2752, and Asn-2769 each carry an N-linked (GlcNAc...) asparagine glycan.

This sequence belongs to the fibrillin family. Interacts with COL16A1. Interacts with integrin alpha-V/beta-3. Interacts with ADAMTS10; this interaction promotes microfibril assembly. Interacts with THSD4; this interaction promotes fibril formation. Interacts (via N-terminal domain) with FBLN2 and FBLN5. Interacts with ELN. Forms a ternary complex with ELN and FBLN2 or FBLN5 and a significant interaction with ELN seen only in the presence of FBLN2 or FBLN5. Interacts (via N-terminal domain) with LTBP2 (via C-terminal domain) in a Ca(+2)-dependent manner. Interacts (via N-terminal domain) with LTBP1 (via C-terminal domain). Interacts with integrins ITGA5:ITGB1, ITGAV:ITGB3 and ITGAV:ITGB6. Interacts (via N-terminal domain) with BMP2, BMP4, BMP7, BMP10 and GDF5. Interacts (via N-terminal domain) with MFAP2 and MFAP5. Interacts with ADAMTSL5. Interacts with MFAP4. Interacts (via N-terminal domain) with TNFSF11 in a Ca(+2)-dependent manner. Interacts (via N-terminal domain) with EFEMP2; this interaction inhibits EFEMP2 binding to LOX and ELN. In terms of processing, cleavage of N- and C-terminus by furin is required for incorporation into the extracellular matrix and assembly into microfibrils. The C-terminus, which corresponds to the Asprosin chain, was initially thought to constitute a propeptide. Fibrillin-1 and Asprosin chains are still linked together during the secretion from cells, but are subsequently separated by furin, an essential step for incorporation of Fibrillin-1 into the nascent microfibrils. Forms intermolecular disulfide bonds either with other fibrillin-1 molecules or with other components of the microfibrils. Post-translationally, O-glycosylated on serine residues by POGLUT2 and POGLUT3 which is necessary for efficient protein secretion. Strongly expressed during the first week of osteoblast differentiation. As to expression, secreted by white adipose tissue (at protein level).

Its subcellular location is the secreted. The protein resides in the extracellular space. It localises to the extracellular matrix. Its function is as follows. Structural component of the 10-12 nm diameter microfibrils of the extracellular matrix, which conveys both structural and regulatory properties to load-bearing connective tissues. Fibrillin-1-containing microfibrils provide long-term force bearing structural support. In tissues such as the lung, blood vessels and skin, microfibrils form the periphery of the elastic fiber, acting as a scaffold for the deposition of elastin. In addition, microfibrils can occur as elastin-independent networks in tissues such as the ciliary zonule, tendon, cornea and glomerulus where they provide tensile strength and have anchoring roles. Fibrillin-1 also plays a key role in tissue homeostasis through specific interactions with growth factors, such as the bone morphogenetic proteins (BMPs), growth and differentiation factors (GDFs) and latent transforming growth factor-beta-binding proteins (LTBPs), cell-surface integrins and other extracellular matrix protein and proteoglycan components. Regulates osteoblast maturation by controlling TGF-beta bioavailability and calibrating TGF-beta and BMP levels, respectively. Negatively regulates osteoclastogenesis by binding and sequestering an osteoclast differentiation and activation factor TNFSF11. This leads to disruption of TNFSF11-induced Ca(2+) signaling and impairment of TNFSF11-mediated nuclear translocation and activation of transcription factor NFATC1 which regulates genes important for osteoclast differentiation and function. Mediates cell adhesion via its binding to cell surface receptors integrins ITGAV:ITGB3 and ITGA5:ITGB1. Binds heparin and this interaction plays an important role in the assembly of microfibrils. Functionally, adipokine secreted by white adipose tissue that plays an important regulatory role in the glucose metabolism of liver, muscle and pancreas. Hormone that targets the liver in response to fasting to increase plasma glucose levels. Binds the olfactory receptor Olfr734 at the surface of hepatocytes and promotes hepatocyte glucose release by activating the protein kinase A activity in the liver, resulting in rapid glucose release into the circulation. May act as a regulator of adaptive thermogenesis by inhibiting browning and energy consumption, while increasing lipid deposition in white adipose tissue. Also acts as an orexigenic hormone that increases appetite: crosses the blood brain barrier and exerts effects on the hypothalamus. In the arcuate nucleus of the hypothalamus, asprosin directly activates orexigenic AgRP neurons and indirectly inhibits anorexigenic POMC neurons, resulting in appetite stimulation. Activates orexigenic AgRP neurons via binding to the olfactory receptor Olfr734. May also play a role in sperm motility in testis via interaction with Olfr734 receptor. The protein is Fibrillin-1 of Mus musculus (Mouse).